A 562-amino-acid polypeptide reads, in one-letter code: Cytosolic invertase 1 (562 aa).

The protein belongs to the glycosyl hydrolase 100 family.

It localises to the cytoplasm. The protein resides in the cytosol. The enzyme catalyses Hydrolysis of terminal non-reducing beta-D-fructofuranoside residues in beta-D-fructofuranosides.. In terms of biological role, cytosolic invertase that cleaves sucrose into glucose and fructose and is involved in the regulation of primary root elongation, lateral root formation, floral transition and pollen development. In Oryza sativa subsp. japonica (Rice), this protein is Cytosolic invertase 1.